Consider the following 80-residue polypeptide: Toxin-like peptide AaF1CA1 (80 aa).

Positions Met1–Gly22 are cleaved as a signal peptide. An LCN-type CS-alpha/beta domain is found at Val25–Ile80. 3 cysteine pairs are disulfide-bonded: Cys40-Cys63, Cys49-Cys68, and Cys53-Cys70.

The protein belongs to the long (3 C-C) scorpion toxin superfamily. Expressed by the venom gland.

It localises to the secreted. Its function is as follows. Probable ion channel inhibitor. In Androctonus australis (Sahara scorpion), this protein is Toxin-like peptide AaF1CA1.